Consider the following 121-residue polypeptide: Large ribosomal subunit protein bL20 (121 aa).

Belongs to the bacterial ribosomal protein bL20 family.

Functionally, binds directly to 23S ribosomal RNA and is necessary for the in vitro assembly process of the 50S ribosomal subunit. It is not involved in the protein synthesizing functions of that subunit. The sequence is that of Large ribosomal subunit protein bL20 from Moorella thermoacetica (strain ATCC 39073 / JCM 9320).